Reading from the N-terminus, the 549-residue chain is ATP synthase subunit alpha (549 aa).

172-179 is an ATP binding site; that stretch reads GDRKTGKT.

The protein belongs to the ATPase alpha/beta chains family. As to quaternary structure, F-type ATPases have 2 components, CF(1) - the catalytic core - and CF(0) - the membrane proton channel. CF(1) has five subunits: alpha(3), beta(3), gamma(1), delta(1), epsilon(1). CF(0) has three main subunits: a(1), b(2) and c(9-12). The alpha and beta chains form an alternating ring which encloses part of the gamma chain. CF(1) is attached to CF(0) by a central stalk formed by the gamma and epsilon chains, while a peripheral stalk is formed by the delta and b chains.

The protein localises to the cell membrane. It catalyses the reaction ATP + H2O + 4 H(+)(in) = ADP + phosphate + 5 H(+)(out). Produces ATP from ADP in the presence of a proton gradient across the membrane. The alpha chain is a regulatory subunit. The sequence is that of ATP synthase subunit alpha from Mycobacterium tuberculosis (strain CDC 1551 / Oshkosh).